A 378-amino-acid chain; its full sequence is 1-acyl-sn-glycerol-3-phosphate acyltransferase delta (378 aa).

Residues 11 to 31 (FLCHLVFCYVFIASGLIINTV) form a helical membrane-spanning segment. Residues 96-101 (HKFEID) carry the HXXXXD motif motif. Helical transmembrane passes span 125–145 (ELAY…VFCS), 307–327 (TLVN…QFLV), and 338–358 (LASF…MIGV).

This sequence belongs to the 1-acyl-sn-glycerol-3-phosphate acyltransferase family.

The protein resides in the endoplasmic reticulum membrane. The catalysed reaction is a 1-acyl-sn-glycero-3-phosphate + an acyl-CoA = a 1,2-diacyl-sn-glycero-3-phosphate + CoA. It carries out the reaction (4Z,7Z,10Z,13Z,16Z,19Z)-docosahexaenoyl-CoA + 1-hexadecanoyl-sn-glycero-3-phosphate = 1-hexadecanoyl-2-(4Z,7Z,10Z,13Z,16Z,19Z-docosahexaenoyl)-sn-glycero-3-phosphate + CoA. The enzyme catalyses 1-octadecanoyl-sn-glycero-3-phosphate + (9Z,12Z)-octadecadienoyl-CoA = 1-octadecanoyl-2-(9Z,12Z-octadecadienoyl)-sn-glycero-3-phosphate + CoA. It catalyses the reaction 1-octadecanoyl-sn-glycero-3-phosphate + (4Z,7Z,10Z,13Z,16Z,19Z)-docosahexaenoyl-CoA = 1-octadecanoyl-2-(4Z,7Z,10Z,13Z,16Z,19Z-docosahexaenoyl)-sn-glycero-3-phosphate + CoA. The catalysed reaction is (4Z,7Z,10Z,13Z,16Z,19Z)-docosahexaenoyl-CoA + 1-(9Z-octadecenoyl)-sn-glycero-3-phosphate = 1-(9Z-octadecenoyl)-2-(4Z,7Z,10Z,13Z,16Z,19Z-docosahexaenoyl)-sn-glycero-3-phosphate + CoA. The protein operates within phospholipid metabolism; CDP-diacylglycerol biosynthesis; CDP-diacylglycerol from sn-glycerol 3-phosphate: step 2/3. Its function is as follows. Converts 1-acyl-sn-glycerol-3-phosphate (lysophosphatidic acid or LPA) into 1,2-diacyl-sn-glycerol-3-phosphate (phosphatidic acid or PA) by incorporating an acyl moiety at the sn-2 position of the glycerol backbone. Exhibits high acyl-CoA specificity for polyunsaturated fatty acyl-CoA, especially docosahexaenoyl-CoA (22:6-CoA, DHA-CoA). This is 1-acyl-sn-glycerol-3-phosphate acyltransferase delta (AGPAT4) from Macaca fascicularis (Crab-eating macaque).